We begin with the raw amino-acid sequence, 882 residues long: Putative HTH-type transcriptional regulator Mb0914c (882 aa).

Residues 814–879 (PARGWGSLTP…QLVDEAARRG (66 aa)) enclose the HTH luxR-type domain. Positions 838–857 (NKDIAKRLFVSPRTVQTHLT) form a DNA-binding region, H-T-H motif.

The polypeptide is Putative HTH-type transcriptional regulator Mb0914c (Mycobacterium bovis (strain ATCC BAA-935 / AF2122/97)).